A 596-amino-acid chain; its full sequence is Chitooligosaccharidolytic beta-N-acetylglucosaminidase (596 aa).

The N-terminal stretch at 1-23 (MWLQAICIYTVFIIIGCGIPTAA) is a signal peptide. N-linked (GlcNAc...) asparagine glycans are attached at residues Asn166, Asn264, and Asn377.

The protein belongs to the glycosyl hydrolase 20 family.

The catalysed reaction is Hydrolysis of terminal non-reducing N-acetyl-D-hexosamine residues in N-acetyl-beta-D-hexosaminides.. In terms of biological role, active during metamorphosis to degrade chitin. In Bombyx mori (Silk moth), this protein is Chitooligosaccharidolytic beta-N-acetylglucosaminidase.